The following is a 236-amino-acid chain: Small ribosomal subunit protein uS2c (236 aa).

Belongs to the universal ribosomal protein uS2 family.

The protein resides in the plastid. The protein localises to the chloroplast. This chain is Small ribosomal subunit protein uS2c (rps2), found in Illicium oligandrum (Star anise).